Consider the following 458-residue polypeptide: Ribosomal protein uS12 methylthiotransferase RimO (458 aa).

The region spanning 8–119 is the MTTase N-terminal domain; sequence PTVAFAHLGC…IVDVLQRVEV (112 aa). [4Fe-4S] cluster is bound by residues Cys17, Cys53, Cys82, Cys157, Cys161, and Cys164. The Radical SAM core domain maps to 143–372; it reads TTDQAVAFLK…MALQQPISAE (230 aa). The 72-residue stretch at 375 to 446 folds into the TRAM domain; sequence SRWVGRTVDV…IYDLNGQMVG (72 aa).

Belongs to the methylthiotransferase family. RimO subfamily. It depends on [4Fe-4S] cluster as a cofactor.

Its subcellular location is the cytoplasm. The catalysed reaction is L-aspartate(89)-[ribosomal protein uS12]-hydrogen + (sulfur carrier)-SH + AH2 + 2 S-adenosyl-L-methionine = 3-methylsulfanyl-L-aspartate(89)-[ribosomal protein uS12]-hydrogen + (sulfur carrier)-H + 5'-deoxyadenosine + L-methionine + A + S-adenosyl-L-homocysteine + 2 H(+). Functionally, catalyzes the methylthiolation of an aspartic acid residue of ribosomal protein uS12. This Synechococcus sp. (strain CC9605) protein is Ribosomal protein uS12 methylthiotransferase RimO.